We begin with the raw amino-acid sequence, 55 residues long: Large ribosomal subunit protein bL33 (55 aa).

Post-translationally, the protein is methylated on either Ala-2 or Lys-3.

The protein is Large ribosomal subunit protein bL33 of Rhodopseudomonas palustris (strain ATCC BAA-98 / CGA009).